Consider the following 266-residue polypeptide: MNVNVPVPSTLADPLVIAGRTFSSRLFLGTAGYPNQKVFLDALEASGSEMATASIRRMSLEGYEESLADLLTGRVHILPNTAGCQTAKDAILTAELAREALETDWVKLEVIGDRELLYPNVEELLKATEELVNRGFVVLPYCNDDPVTCQKLADLGAATVMPLGSMIGTGLGIANPHMIELICARSPVPVVLDAGIGTASDAAQAMELGCAAVLLNTAVSKAHDPVRMARAFRYAVEGGRLARLAGRIPKKLHAEASSPEFGLVGS.

The active-site Schiff-base intermediate with DXP is lysine 107. 1-deoxy-D-xylulose 5-phosphate is bound by residues glycine 168, 194–195 (AG), and 216–217 (NT).

The protein belongs to the ThiG family. In terms of assembly, homotetramer. Forms heterodimers with either ThiH or ThiS.

It localises to the cytoplasm. The enzyme catalyses [ThiS sulfur-carrier protein]-C-terminal-Gly-aminoethanethioate + 2-iminoacetate + 1-deoxy-D-xylulose 5-phosphate = [ThiS sulfur-carrier protein]-C-terminal Gly-Gly + 2-[(2R,5Z)-2-carboxy-4-methylthiazol-5(2H)-ylidene]ethyl phosphate + 2 H2O + H(+). The protein operates within cofactor biosynthesis; thiamine diphosphate biosynthesis. In terms of biological role, catalyzes the rearrangement of 1-deoxy-D-xylulose 5-phosphate (DXP) to produce the thiazole phosphate moiety of thiamine. Sulfur is provided by the thiocarboxylate moiety of the carrier protein ThiS. In vitro, sulfur can be provided by H(2)S. This chain is Thiazole synthase, found in Azorhizobium caulinodans (strain ATCC 43989 / DSM 5975 / JCM 20966 / LMG 6465 / NBRC 14845 / NCIMB 13405 / ORS 571).